A 1657-amino-acid polypeptide reads, in one-letter code: Ras GTPase-activating-like protein IQGAP1 (1657 aa).

Serine 2 bears the N-acetylserine mark. The residue at position 2 (serine 2) is a Phosphoserine. The Calponin-homology (CH) domain maps to 44–159 (LCHLEEAKRW…YCIHALSLYL (116 aa)). Residue tyrosine 172 is modified to Phosphotyrosine. Serine 330 is modified (phosphoserine). The WW domain maps to 685–710 (WVKHWVKGGYHYYHNLETQAGGWAEP). 4 consecutive IQ domains span residues 745–774 (NEGLITKLQACCRGYLVRQEFRSRMNFLKK), 775–804 (QIPAITCIQSQWRGYKQKKAYQDRLAYLHS), 805–834 (HKDEVVKIQSLARMHQARKRYRDRLQYFRD), and 835–864 (HINDIIKIQAFIRANKARDDYKTLINAEDP). Residues 956–1274 (GGLKALSKEK…FFQVACDVPE (319 aa)) form a C1 region. One can recognise a Ras-GAP domain in the interval 1020–1269 (YLLLRLFQTA…QKFRRFFQVA (250 aa)). Residues 1276–1657 (QDKFNVDEYS…FLLNKKFYGK (382 aa)) are C2. Serine 1441 is subject to Phosphoserine.

As to quaternary structure, interacts with CDC42; the interaction is demonstrated with IQGAP1 in GTP-bound and in nucleotide-free state. Interacts with RAC1. Does not interact with RHOA. Interacts with TSG101. Interacts with PAK6. Interacts with SASH1. Interacts with PJVK. Interacts with SLC26A4. This interaction enhances the chloride-bicarbonate exchange activity of SLC26A4. Interacts with SVEP1. Interacts with ILK; the interaction is required for localization of IQGAP to the cell cortex. In terms of assembly, (Microbial infection) In case of infection, interacts with S.typhimurium protein sseI. In terms of tissue distribution, expressed in the kidney (at protein level).

The protein localises to the cell membrane. It localises to the nucleus. Its subcellular location is the cytoplasm. The protein resides in the cell cortex. It is found in the apical cell membrane. The protein localises to the basolateral cell membrane. In terms of biological role, plays a crucial role in regulating the dynamics and assembly of the actin cytoskeleton. Recruited to the cell cortex by interaction with ILK which allows it to cooperate with its effector DIAPH1 to locally stabilize microtubules and allow stable insertion of caveolae into the plasma membrane. Binds to activated CDC42 but does not stimulate its GTPase activity. Associates with calmodulin. May promote neurite outgrowth. May play a possible role in cell cycle regulation by contributing to cell cycle progression after DNA replication arrest. The chain is Ras GTPase-activating-like protein IQGAP1 (Iqgap1) from Mus musculus (Mouse).